Reading from the N-terminus, the 375-residue chain is MIFNPVISNHKLSHYIHVFCTFTTFCILGTETRQAITALSTYTPAFVTAPTVLWSNCSSCMLMGIMQSLNAYTWMKDHQVLFLGVTTGYCGALSSFSSMLLEMFEHSTNLTNGNIANHTKLPNRAYGIMEFLSVLLVHLMVSMGSLIFGRQLGKEVIVAYGSSSFSKPYTPPSDTVKENAGDVDTQEMEKNILEFKFKTPAPFFKKFFDIVDKLAYALAFPLIILFVVLCAYYENYSRGKWTLPCLFGIFAGFLRYWLAEMFNKTNKKFPLGTFLANVFATLLIGIFTMVQRGKKHFSTDVPIVNSLNSCHIVSALISGFCGTLSTISTFINEGYKLSFINMLIYYTVSIAISYCLLVITLGSYAWTRGLTNPIC.

Residues 1–11 (MIFNPVISNHK) lie on the Cytoplasmic side of the membrane. The chain crosses the membrane as a helical span at residues 12-32 (LSHYIHVFCTFTTFCILGTET). Topologically, residues 33 to 34 (RQ) are extracellular. The chain crosses the membrane as a helical span at residues 35 to 55 (AITALSTYTPAFVTAPTVLWS). Topologically, residues 56 to 79 (NCSSCMLMGIMQSLNAYTWMKDHQ) are cytoplasmic. The chain crosses the membrane as a helical span at residues 80–100 (VLFLGVTTGYCGALSSFSSML). The Extracellular portion of the chain corresponds to 101–127 (LEMFEHSTNLTNGNIANHTKLPNRAYG). N-linked (GlcNAc...) asparagine glycans are attached at residues Asn109 and Asn117. A helical transmembrane segment spans residues 128 to 148 (IMEFLSVLLVHLMVSMGSLIF). Residues 149 to 213 (GRQLGKEVIV…FKKFFDIVDK (65 aa)) are Cytoplasmic-facing. Residues 214–234 (LAYALAFPLIILFVVLCAYYE) form a helical membrane-spanning segment. Asn235 carries N-linked (GlcNAc...) asparagine glycosylation. The Extracellular segment spans residues 235 to 241 (NYSRGKW). Residues 242–262 (TLPCLFGIFAGFLRYWLAEMF) form a helical membrane-spanning segment. At 263-268 (NKTNKK) the chain is on the cytoplasmic side. The chain crosses the membrane as a helical span at residues 269-289 (FPLGTFLANVFATLLIGIFTM). Residues 290–310 (VQRGKKHFSTDVPIVNSLNSC) are Extracellular-facing. Residues 311–331 (HIVSALISGFCGTLSTISTFI) form a helical membrane-spanning segment. The Cytoplasmic segment spans residues 332-338 (NEGYKLS). The helical transmembrane segment at 339-359 (FINMLIYYTVSIAISYCLLVI) threads the bilayer. Over 360–375 (TLGSYAWTRGLTNPIC) the chain is Extracellular.

This sequence belongs to the fluoride channel Fluc/FEX (TC 1.A.43) family.

Its subcellular location is the cell membrane. The enzyme catalyses fluoride(in) = fluoride(out). Functionally, fluoride channel required for the rapid expulsion of cytoplasmic fluoride. The protein is Fluoride export protein 1 of Saccharomyces cerevisiae (strain ATCC 204508 / S288c) (Baker's yeast).